Here is a 100-residue protein sequence, read N- to C-terminus: Urease subunit gamma (100 aa).

This sequence belongs to the urease gamma subunit family. As to quaternary structure, heterotrimer of UreA (gamma), UreB (beta) and UreC (alpha) subunits. Three heterotrimers associate to form the active enzyme.

Its subcellular location is the cytoplasm. The enzyme catalyses urea + 2 H2O + H(+) = hydrogencarbonate + 2 NH4(+). Its pathway is nitrogen metabolism; urea degradation; CO(2) and NH(3) from urea (urease route): step 1/1. The chain is Urease subunit gamma from Corynebacterium efficiens (strain DSM 44549 / YS-314 / AJ 12310 / JCM 11189 / NBRC 100395).